Consider the following 355-residue polypeptide: S-adenosylmethionine:tRNA ribosyltransferase-isomerase (355 aa).

This sequence belongs to the QueA family. Monomer.

The protein localises to the cytoplasm. The catalysed reaction is 7-aminomethyl-7-carbaguanosine(34) in tRNA + S-adenosyl-L-methionine = epoxyqueuosine(34) in tRNA + adenine + L-methionine + 2 H(+). It functions in the pathway tRNA modification; tRNA-queuosine biosynthesis. Functionally, transfers and isomerizes the ribose moiety from AdoMet to the 7-aminomethyl group of 7-deazaguanine (preQ1-tRNA) to give epoxyqueuosine (oQ-tRNA). The sequence is that of S-adenosylmethionine:tRNA ribosyltransferase-isomerase from Gluconacetobacter diazotrophicus (strain ATCC 49037 / DSM 5601 / CCUG 37298 / CIP 103539 / LMG 7603 / PAl5).